The chain runs to 64 residues: Large ribosomal subunit protein bL28 (64 aa).

This sequence belongs to the bacterial ribosomal protein bL28 family.

This is Large ribosomal subunit protein bL28 from Desulfotalea psychrophila (strain LSv54 / DSM 12343).